A 475-amino-acid chain; its full sequence is Cytosolic non-specific dipeptidase (475 aa).

The residue at position 2 (alanine 2) is an N-acetylalanine. Position 9 is an N6-acetyllysine (lysine 9). Serine 58 carries the post-translational modification Phosphoserine. Histidine 99 is a Mn(2+) binding site. The active site involves aspartate 101. Aspartate 132 is a Mn(2+) binding site. Glutamate 166 acts as the Proton acceptor in catalysis. Residues 166–167, aspartate 195, and histidine 228 each bind substrate; that span reads EE. The Mn(2+) site is built by glutamate 167 and aspartate 195. Serine 299 is modified (phosphoserine). 4 residues coordinate substrate: threonine 330, arginine 343, serine 417, and histidine 445. Residue histidine 445 participates in Mn(2+) binding.

It belongs to the peptidase M20A family. In terms of assembly, homodimer. Requires Mn(2+) as cofactor. In terms of tissue distribution, ubiquitously expressed with higher levels in kidney and liver (at protein level). Expressed in peripheral blood leukocytes. Expressed in gastric mucosa and down-regulated in gastric cancer mucosal tissues (at protein level). As to expression, broadly expressed in fetal tissues. Expressed in adult liver and placenta.

The protein resides in the cytoplasm. It catalyses the reaction Hydrolysis of dipeptides, preferentially hydrophobic dipeptides including prolyl amino acids.. It carries out the reaction L-threonyl-L-threonine + H2O = 2 L-threonine. The catalysed reaction is L-threonyl-L-serine + H2O = L-threonine + L-serine. The enzyme catalyses L-seryl-L-threonine + H2O = L-threonine + L-serine. It catalyses the reaction L-cysteinylglycine + H2O = L-cysteine + glycine. It carries out the reaction L-alanyl-L-cysteine + H2O = L-cysteine + L-alanine. The catalysed reaction is (S)-lactate + L-phenylalanine = N-[(S)-lactoyl]-L-phenylalanine + H2O. With respect to regulation, inhibited by p-hydroxymercurybenzoate. The inhibitory concentration 50% (IC(50)) is 13 uM. Inhibited by bestatin. The inhibitory concentration 50% (IC(50)) is 7 nM at pH 9.5. Catalyzes the peptide bond hydrolysis in dipeptides, displaying a non-redundant activity toward threonyl dipeptides. Mediates threonyl dipeptide catabolism in a tissue-specific way. Has high dipeptidase activity toward cysteinylglycine, an intermediate metabolite in glutathione metabolism. Metabolizes N-lactoyl-amino acids, both through hydrolysis to form lactic acid and amino acids, as well as through their formation by reverse proteolysis. Plays a role in the regulation of cell cycle arrest and apoptosis. The polypeptide is Cytosolic non-specific dipeptidase (Homo sapiens (Human)).